A 365-amino-acid chain; its full sequence is Phospho-N-acetylmuramoyl-pentapeptide-transferase (365 aa).

The next 10 membrane-spanning stretches (helical) occupy residues 3-23 (HIII…PILI), 54-74 (GIAI…ASVF), 81-101 (PTAS…LGFL), 119-139 (GKLL…LLFL), 162-182 (IAIG…YILV), 198-218 (LAAG…FWQF), 239-259 (LSIL…WNAA), 263-283 (IFMG…LSVT), 289-309 (LMIV…IQVV), and 342-362 (FWLL…ADWL).

It belongs to the glycosyltransferase 4 family. MraY subfamily. Mg(2+) serves as cofactor.

The protein resides in the cell membrane. It carries out the reaction UDP-N-acetyl-alpha-D-muramoyl-L-alanyl-gamma-D-glutamyl-meso-2,6-diaminopimeloyl-D-alanyl-D-alanine + di-trans,octa-cis-undecaprenyl phosphate = di-trans,octa-cis-undecaprenyl diphospho-N-acetyl-alpha-D-muramoyl-L-alanyl-D-glutamyl-meso-2,6-diaminopimeloyl-D-alanyl-D-alanine + UMP. It participates in cell wall biogenesis; peptidoglycan biosynthesis. Its function is as follows. Catalyzes the initial step of the lipid cycle reactions in the biosynthesis of the cell wall peptidoglycan: transfers peptidoglycan precursor phospho-MurNAc-pentapeptide from UDP-MurNAc-pentapeptide onto the lipid carrier undecaprenyl phosphate, yielding undecaprenyl-pyrophosphoryl-MurNAc-pentapeptide, known as lipid I. The chain is Phospho-N-acetylmuramoyl-pentapeptide-transferase from Corynebacterium kroppenstedtii (strain DSM 44385 / JCM 11950 / CIP 105744 / CCUG 35717).